A 575-amino-acid chain; its full sequence is Alpha-(1,6)-fucosyltransferase (575 aa).

The Cytoplasmic portion of the chain corresponds to 1-9; it reads MRPWTGSWR. A helical; Signal-anchor for type II membrane protein membrane pass occupies residues 10–30; the sequence is WIMLILFAWGTLLFYIGGHLV. At 31 to 575 the chain is on the lumenal side; the sequence is RDNDHPDHSS…KYPTYPEAEK (545 aa). 3 cysteine pairs are disulfide-bonded: C204-C266, C212-C230, and C218-C222. The GT23 domain maps to 206–493; the sequence is KAKKLVCNIN…PDASANFHSL (288 aa). At S278 the chain carries Phosphoserine. An SH3-binding motif is present at residues 299–305; the sequence is PRPPYLP. The tract at residues 365 to 366 is important for donor substrate binding; sequence RR. Residues C465 and C472 are joined by a disulfide bond. One can recognise an SH3 domain in the interval 502 to 563; it reads QNAHNQIAIY…PSYKVREKIE (62 aa).

This sequence belongs to the glycosyltransferase 23 family. Tyrosine phosphorylated by PKDCC/VLK.

Its subcellular location is the golgi apparatus. It is found in the golgi stack membrane. The enzyme catalyses N(4)-{beta-D-GlcNAc-(1-&gt;2)-alpha-D-Man-(1-&gt;3)-[beta-D-GlcNAc-(1-&gt;2)-alpha-D-Man-(1-&gt;6)]-beta-D-Man-(1-&gt;4)-beta-D-GlcNAc-(1-&gt;4)-beta-D-GlcNAc}-L-asparaginyl-[protein] + GDP-beta-L-fucose = an N(4)-{beta-D-GlcNAc-(1-&gt;2)-alpha-D-Man-(1-&gt;3)-[beta-D-GlcNAc-(1-&gt;2)-alpha-D-Man-(1-&gt;6)]-beta-D-Man-(1-&gt;4)-beta-D-GlcNAc-(1-&gt;4)-[alpha-L-Fuc-(1-&gt;6)]-beta-D-GlcNAc}-L-asparaginyl-[protein] + GDP + H(+). It participates in protein modification; protein glycosylation. Catalyzes the addition of fucose in alpha 1-6 linkage to the first GlcNAc residue, next to the peptide chains in N-glycans. This is Alpha-(1,6)-fucosyltransferase (FUT8) from Canis lupus familiaris (Dog).